The following is a 304-amino-acid chain: Mycothiol acetyltransferase (304 aa).

N-acetyltransferase domains are found at residues 16-155 and 164-304; these read AHVE…RTGL and VALS…YRRA. 1D-myo-inositol 2-(L-cysteinylamino)-2-deoxy-alpha-D-glucopyranoside is bound at residue Glu46. Residue 87-89 coordinates acetyl-CoA; sequence LVV. 1D-myo-inositol 2-(L-cysteinylamino)-2-deoxy-alpha-D-glucopyranoside is bound by residues Glu190, Lys230, and Glu237. Acetyl-CoA contacts are provided by residues 241–243 and 248–254; these read LGV and AARGLGS. Tyr275 is a 1D-myo-inositol 2-(L-cysteinylamino)-2-deoxy-alpha-D-glucopyranoside binding site.

It belongs to the acetyltransferase family. MshD subfamily. As to quaternary structure, monomer.

It carries out the reaction 1D-myo-inositol 2-(L-cysteinylamino)-2-deoxy-alpha-D-glucopyranoside + acetyl-CoA = mycothiol + CoA + H(+). In terms of biological role, catalyzes the transfer of acetyl from acetyl-CoA to desacetylmycothiol (Cys-GlcN-Ins) to form mycothiol. The chain is Mycothiol acetyltransferase from Clavibacter sepedonicus (Clavibacter michiganensis subsp. sepedonicus).